The following is a 91-amino-acid chain: Probable Thioredoxin (91 aa).

The region spanning 1 to 91 is the Glutaredoxin domain; that stretch reads MVMMKLFTSP…LKGGEEYGAS (91 aa). A disulfide bridge links Cys-12 with Cys-15.

It belongs to the glutaredoxin family.

The protein resides in the cytoplasm. Its function is as follows. Acts to maintain redox homeostasis; functions as a protein disulfide reductase. In Archaeoglobus fulgidus (strain ATCC 49558 / DSM 4304 / JCM 9628 / NBRC 100126 / VC-16), this protein is Probable Thioredoxin.